The primary structure comprises 302 residues: Tegument protein VP22 (302 aa).

Over residues Met1 to Cys10 the composition is skewed to basic and acidic residues. Disordered regions lie at residues Met1–Ser42 and Ser125–Cys170. An interaction with gE region spans residues Arg154 to Ala244. Residues Ser157–Cys170 show a composition bias toward polar residues. The Nuclear export signal motif lies at Leu212–Thr224. The tract at residues Gly243 to Lys302 is disordered.

This sequence belongs to the alphaherpesvirinae VP22 tegument protein family. In terms of assembly, interacts with gE (via C-terminus); this interaction is necessary for the recruitment of VP22/ORF9 to the Golgi and its packaging into virions. Interacts with gM (via C-terminus). Interacts with VP16/ORF10; this interaction allows the formation of a tripartite complex composed of VP16/ORF10, VP22/ORF9 and VHS/ORF17. Interacts with the capsid-binding protein ORF44. Interacts with host CGAS. In terms of processing, highly phosphorylated in the host cell. Packaging is selective for underphosphorylated forms.

It localises to the virion tegument. The protein localises to the host cytoplasm. It is found in the host nucleus. The protein resides in the host Golgi apparatus. Its function is as follows. Tegument protein that plays different roles during the time course of infection. Participates in both the accumulation of viral mRNAs and viral protein translation at late time of infection. Modulates the RNase activity of the virion host shutoff protein ORF17 probably to ensure necessary levels of key cellular mRNAs and proteins. Plays a role in microtubule reorganization that occurs after viral infection by stabilizing microtubule network. Plays a role in the inhibition of host innate immune system by targeting the CGAS enzymatic activity which is the principal cytosolic DNA sensor that detects invading viral DNA. Acts by mediating disruption of liquid-like droplets in which CGAS is activated, thereby preventing CGAS activity. This is Tegument protein VP22 from Homo sapiens (Human).